The chain runs to 449 residues: Xylose isomerase (449 aa).

Catalysis depends on residues His-101 and Asp-104. Glu-232, Glu-268, His-271, Asp-296, Asp-307, Asp-309, and Asp-340 together coordinate Mg(2+).

Belongs to the xylose isomerase family. In terms of assembly, homotetramer. It depends on Mg(2+) as a cofactor.

It is found in the cytoplasm. It catalyses the reaction alpha-D-xylose = alpha-D-xylulofuranose. The polypeptide is Xylose isomerase (Bifidobacterium longum (strain NCC 2705)).